Here is a 278-residue protein sequence, read N- to C-terminus: S-formylglutathione hydrolase YeiG (278 aa).

Catalysis depends on charge relay system residues Ser-145, Asp-223, and His-256.

It belongs to the esterase D family.

The enzyme catalyses S-formylglutathione + H2O = formate + glutathione + H(+). In terms of biological role, serine hydrolase involved in the detoxification of formaldehyde. Hydrolyzes S-formylglutathione to glutathione and formate. This is S-formylglutathione hydrolase YeiG (yeiG) from Shigella flexneri serotype 5b (strain 8401).